We begin with the raw amino-acid sequence, 795 residues long: Antibiotic resistant DNA gyrase subunit B (795 aa).

The region spanning 421 to 536 (SELYLVEGNS…RGYIYIAQPP (116 aa)) is the Toprim domain. The Mg(2+) site is built by E427, D501, and D503.

The protein belongs to the type II topoisomerase GyrB family. As to quaternary structure, heterotetramer, composed of two GyrA and two GyrB chains. In the heterotetramer, GyrA contains the active site tyrosine that forms a transient covalent intermediate with DNA, while GyrB binds cofactors and catalyzes ATP hydrolysis. It depends on Mg(2+) as a cofactor. The cofactor is Mn(2+). Requires Ca(2+) as cofactor.

The protein localises to the cytoplasm. The catalysed reaction is ATP-dependent breakage, passage and rejoining of double-stranded DNA.. Functionally, a type II topoisomerase that negatively supercoils closed circular double-stranded (ds) DNA in an ATP-dependent manner to modulate DNA topology and maintain chromosomes in an underwound state. Negative supercoiling favors strand separation, and DNA replication, transcription, recombination and repair, all of which involve strand separation. Also able to catalyze the interconversion of other topological isomers of dsDNA rings, including catenanes and knotted rings. Type II topoisomerases break and join 2 DNA strands simultaneously in an ATP-dependent manner. The sequence is that of Antibiotic resistant DNA gyrase subunit B from Neisseria gonorrhoeae.